Consider the following 200-residue polypeptide: NADH-quinone oxidoreductase subunit I (200 aa).

4Fe-4S ferredoxin-type domains follow at residues 73–102 (RLLE…METT) and 112–141 (LNYS…HGGD). The [4Fe-4S] cluster site is built by C82, C85, C88, C92, C121, C124, C127, and C131.

This sequence belongs to the complex I 23 kDa subunit family. In terms of assembly, NDH-1 is composed of 14 different subunits. Subunits NuoA, H, J, K, L, M, N constitute the membrane sector of the complex. [4Fe-4S] cluster serves as cofactor.

The protein resides in the cell inner membrane. It catalyses the reaction a quinone + NADH + 5 H(+)(in) = a quinol + NAD(+) + 4 H(+)(out). NDH-1 shuttles electrons from NADH, via FMN and iron-sulfur (Fe-S) centers, to quinones in the respiratory chain. The immediate electron acceptor for the enzyme in this species is believed to be ubiquinone. Couples the redox reaction to proton translocation (for every two electrons transferred, four hydrogen ions are translocated across the cytoplasmic membrane), and thus conserves the redox energy in a proton gradient. The protein is NADH-quinone oxidoreductase subunit I of Campylobacter hominis (strain ATCC BAA-381 / DSM 21671 / CCUG 45161 / LMG 19568 / NCTC 13146 / CH001A).